A 178-amino-acid chain; its full sequence is Protein GrpE (178 aa).

The span at 1–11 shows a compositional bias: basic and acidic residues; the sequence is MADELSEKSVE. Residues 1-32 form a disordered region; it reads MADELSEKSVEGTEEDGESAPAEGTTEGVPVD.

It belongs to the GrpE family. Homodimer.

The protein resides in the cytoplasm. Functionally, participates actively in the response to hyperosmotic and heat shock by preventing the aggregation of stress-denatured proteins, in association with DnaK and GrpE. It is the nucleotide exchange factor for DnaK and may function as a thermosensor. Unfolded proteins bind initially to DnaJ; upon interaction with the DnaJ-bound protein, DnaK hydrolyzes its bound ATP, resulting in the formation of a stable complex. GrpE releases ADP from DnaK; ATP binding to DnaK triggers the release of the substrate protein, thus completing the reaction cycle. Several rounds of ATP-dependent interactions between DnaJ, DnaK and GrpE are required for fully efficient folding. The protein is Protein GrpE of Methanothrix thermoacetophila (strain DSM 6194 / JCM 14653 / NBRC 101360 / PT) (Methanosaeta thermophila).